Consider the following 223-residue polypeptide: TMF-regulated nuclear protein 1 (223 aa).

Disordered stretches follow at residues methionine 1–glycine 84 and glycine 196–arginine 223. Positions glycine 21–proline 54 are enriched in pro residues. A compositionally biased stretch (gly residues) spans alanine 73–glycine 84.

Interacts with TMF1; may regulate TRNP1 proteasomal degradation. Post-translationally, ubiquitinated, leading to its degradation by the proteasome. As to expression, expressed in brain and kidney (at protein level). Also detected in spleen and intestine.

Its subcellular location is the nucleus. DNA-binding factor that regulates the expression of a subset of genes and plays a key role in tangential, radial, and lateral expansion of the brain neocortex. Regulates neural stem cells proliferation and the production of intermediate neural progenitors and basal radial glial cells affecting the process of cerebral cortex gyrification. May control the proliferation rate of cells by regulating their progression through key cell-cycle transition points. The sequence is that of TMF-regulated nuclear protein 1 (Trnp1) from Mus musculus (Mouse).